Consider the following 581-residue polypeptide: Nicotinic acid-CoA ligase pyr1 (581 aa).

204-215 (MFLTSGTSGLPK) is a binding site for AMP. The AMP-binding stretch occupies residues 477–555 (EIEGILLKDP…DEIPRTGIGK (79 aa)).

Belongs to the ATP-dependent AMP-binding enzyme family.

The enzyme catalyses nicotinate + ATP + CoA = nicotinyl-CoA + AMP + diphosphate. The protein operates within secondary metabolite biosynthesis; terpenoid biosynthesis. Its function is as follows. Nicotinic acid-CoA ligase; part of the gene cluster that mediates the biosynthesis of pyripyropene A, a specific human acyl-coenzyme A:cholesterol acyltransferase 2 inhibitor. The first step of the pathway is the synthesis of nicotinyl-CoA from nicotinic acid by the nicotinic acid-CoA ligase pyr1. Nicotinyl-CoA is then a substrate of polyketide synthase pyr2 to produce 4-hydroxy-6-(3-pyridinyl)-2H-pyran-2-one (HPPO) which is further prenylated by the polyprenyl transferase pyr6 to yield farnesyl-HPPO. The next steps consist of an epoxidation of farnesyl-HPPO to epoxyfarnesyl-HPPO by FAD-dependent monooxygenase pyr5 and a cyclization of the terpenoid portion by the terpene cyclase pyr4 to yield deacetyl-pyripyropene E. The 2 cytochrome P450 monooxygenases pyr3 and pyr9, and the 2 acetyltransferases pyr7 and pyr8 are involved in the conversion of deacetyl-pyripyropene E into pyripyropene A through several cycles of oxidation and acetylation steps. Pyr7 acetylates deacetyl-pyripyropene E to pyripyropene E which is oxidized to 11-deacetyl-pyripyropene O by pyr3, which is in turn acetylated into pyripyropene O by pyr8. Pyripyropene O is then oxidized to deacetyl-pyripyropene A by pyr9. Deacetyl-pyripyropene A is finally acetylated to pyripyropene A by pyr8. The chain is Nicotinic acid-CoA ligase pyr1 from Aspergillus fumigatus (strain ATCC MYA-4609 / CBS 101355 / FGSC A1100 / Af293) (Neosartorya fumigata).